We begin with the raw amino-acid sequence, 2065 residues long: WD repeat-containing protein 81 (2065 aa).

The BEACH domain maps to 325–617 (LCRNCQDELK…EPPHFGRVNV (293 aa)). Disordered stretches follow at residues 1082–1111 (EEEE…GGSG), 1156–1230 (TTVG…VEDR), 1271–1290 (GEKN…DSEE), and 1595–1642 (ASPG…GGDI). The segment covering 1101–1111 (KVGGGSGGGSG) has biased composition (gly residues). The segment covering 1156 to 1169 (TTVGTKQQNQSTAN) has biased composition (polar residues). Residues 1213–1228 (DGEDGGELEDEEETVE) are compositionally biased toward acidic residues. Low complexity predominate over residues 1624 to 1637 (SRSPFPAPSSTSTP). WD repeat units follow at residues 1767–1806 (GHSG…DGTR), 1813–1853 (TYTE…NIRC), 1906–1945 (LSAG…VLRG), 1948–1986 (GHEG…PLHQ), and 2035–2065 (NFRG…RLLA).

It belongs to the WD repeat WDR81 family. In terms of tissue distribution, widely expressed.

The protein resides in the early endosome membrane. The protein localises to the late endosome membrane. It is found in the lysosome membrane. It localises to the cytoplasmic vesicle. Its subcellular location is the autophagosome membrane. The protein resides in the mitochondrion. The protein localises to the cytoplasm. It is found in the cytosol. Functions as a negative regulator of the PI3 kinase/PI3K activity associated with endosomal membranes. By modifying the phosphatidylinositol 3-phosphate/PtdInsP3 content of endosomal membranes may regulate endosome fusion, recycling, sorting and early to late endosome transport. May also play a role in aggrephagy, the macroautophagic degradation of ubiquitinated protein aggregates. May also be involved in maintenance of normal mitochondrial structure and organization. The sequence is that of WD repeat-containing protein 81 (wdr81) from Danio rerio (Zebrafish).